A 348-amino-acid chain; its full sequence is Peroxidase 40 (348 aa).

The N-terminal stretch at 1-21 (MKNLFNLFLMFFFAMPILSLS) is a signal peptide. Residue asparagine 26 is glycosylated (N-linked (GlcNAc...) asparagine). 4 disulfide bridges follow: cysteine 59–cysteine 139, cysteine 92–cysteine 97, cysteine 145–cysteine 344, and cysteine 224–cysteine 256. Catalysis depends on histidine 90, which acts as the Proton acceptor. Aspartate 91, valine 94, glycine 96, aspartate 98, and serine 100 together coordinate Ca(2+). Positions 170–189 (GRKDSRTASKQAATNGLPSP) are disordered. Positions 177-189 (ASKQAATNGLPSP) are enriched in polar residues. Proline 187 contributes to the substrate binding site. A glycan (N-linked (GlcNAc...) asparagine) is linked at asparagine 190. Histidine 217 contributes to the heme b binding site. Threonine 218 contacts Ca(2+). Residues aspartate 269, threonine 272, and aspartate 277 each coordinate Ca(2+).

It belongs to the peroxidase family. Classical plant (class III) peroxidase subfamily. Requires heme b as cofactor. The cofactor is Ca(2+).

Its subcellular location is the secreted. The enzyme catalyses 2 a phenolic donor + H2O2 = 2 a phenolic radical donor + 2 H2O. In terms of biological role, removal of H(2)O(2), oxidation of toxic reductants, biosynthesis and degradation of lignin, suberization, auxin catabolism, response to environmental stresses such as wounding, pathogen attack and oxidative stress. These functions might be dependent on each isozyme/isoform in each plant tissue. This Arabidopsis thaliana (Mouse-ear cress) protein is Peroxidase 40 (PER40).